A 528-amino-acid chain; its full sequence is MPVTMSQAFLDNFLGNSPKWFKFAILSFLVINPVVFYLNPFVAGWLLVLEFIFTLAMALKCYPLQPGGLLAIEAVIIGMTSPSQVLHEIEANLEVLLLLIFMVAGIYFMKQLLLFAFTKMITKVRSKIAVSIMCCVASAFLSAFLDALTVIAVIIAVAVGFYSIYHKVASGKNFNDSHDHTSDGQSQLCEEELEAFRGFLRNLLMHAGVGTALGGVCTMVGEPQNLIIAAQANWQFAEFALRMSPVTVPVFVAGVLTCFLVEKFRVFDYGKQLPDAVHKILSDYSAHEDAHRTKHDKIKLIIQALVGVWLIIGLAFHLASVGLIGLSVIILTTAFNGVTNEHQLGKAFEEALPFTALLAVFFAIVGVIIDQQLFAPVIQWALSYEGNTQLVIFYIAIGLLSMVSDNVFVGTVYINEVKAALLDGQITRDQFDLLAVAINTGTNLPSVATPNGQAAFLFLLTSAIAPLIRLSYGRMVWMALPYTIVLSIVGILAIQFGALEQMTQYFYDNNMLLHHTLQEVGNSAASAH.

11 helical membrane passes run 23 to 45 (FAIL…VAGW), 66 to 86 (PGGL…SQVL), 95 to 115 (VLLL…LLLF), 139 to 159 (AFLS…AVAV), 203 to 223 (LLMH…VGEP), 241 to 261 (LRMS…CFLV), 310 to 330 (LIIG…SVII), 349 to 369 (EEAL…GVII), 390 to 410 (LVIF…VFVG), 448 to 468 (ATPN…APLI), and 476 to 496 (VWMA…AIQF).

The protein belongs to the NhaB Na(+)/H(+) (TC 2.A.34) antiporter family.

The protein resides in the cell inner membrane. It carries out the reaction 2 Na(+)(in) + 3 H(+)(out) = 2 Na(+)(out) + 3 H(+)(in). Functionally, na(+)/H(+) antiporter that extrudes sodium in exchange for external protons. This is Na(+)/H(+) antiporter NhaB from Shewanella piezotolerans (strain WP3 / JCM 13877).